The primary structure comprises 62 residues: uncharacterized protein (62 aa).

The segment at 38 to 62 (VKSESDTADSKRSAEAKADEAPAKM) is disordered.

This is an uncharacterized protein from Schizosaccharomyces pombe (strain 972 / ATCC 24843) (Fission yeast).